Consider the following 302-residue polypeptide: MHVLLIAGGWSEEREVSLSGAKGIEQALLELGHDVEFVDPAKDFKNILLLAEHADFAFINLHGSPGEDGLIQAMLNQVNCPYQGAEPESSFLTLNKAATKTVFDHHGILTPKWELVCAADGCKGLQDLEPPVFIKPNSGGSSLGMTFARTAEELEKGIETVFSLGDSALVEEYTKGIEVTCGILDGEPMPLILINPPDNAEFFDYHSKYALDGAEEICPAPIDPVLTEQIQQITAKAHKLLGLTDYSRADFIISEGVPYLLEVNTLPGMTPTSLVPQAAKEAGYSFNELIAKLIELGQRKRK.

Residues 100–295 (KTVFDHHGIL…FNELIAKLIE (196 aa)) enclose the ATP-grasp domain. 126–180 (QDLEPPVFIKPNSGGSSLGMTFARTAEELEKGIETVFSLGDSALVEEYTKGIEVT) contributes to the ATP binding site. Mg(2+) is bound by residues D250, E262, and N264.

It belongs to the D-alanine--D-alanine ligase family. The cofactor is Mg(2+). Mn(2+) serves as cofactor.

The protein localises to the cytoplasm. The enzyme catalyses 2 D-alanine + ATP = D-alanyl-D-alanine + ADP + phosphate + H(+). Its pathway is cell wall biogenesis; peptidoglycan biosynthesis. In terms of biological role, cell wall formation. This chain is D-alanine--D-alanine ligase, found in Maridesulfovibrio salexigens (strain ATCC 14822 / DSM 2638 / NCIMB 8403 / VKM B-1763) (Desulfovibrio salexigens).